Consider the following 1438-residue polypeptide: Membrane-anchored lipid-binding protein YSP2 (1438 aa).

A compositionally biased stretch (basic and acidic residues) spans 1–17; that stretch reads MRDEATRKKRSFSDGHF. 7 disordered regions span residues 1–97, 174–194, 200–219, 285–308, 338–418, 455–485, and 505–543; these read MRDE…SHTP, KVKH…NERP, QKDD…SAPN, QQQH…QNPN, TSGP…KVKF, DENN…LGPK, and SQSN…RYSS. The Cytoplasmic segment spans residues 1-1277; that stretch reads MRDEATRKKR…SAFSMLQQVN (1277 aa). Position 13 is a phosphoserine (Ser-13). The span at 18–29 shows a compositional bias: basic residues; it reads FKKLKLMSRKKQ. Positions 30 to 44 are enriched in basic and acidic residues; the sequence is PVMERSKTTRTRKES. Positions 45-58 are enriched in low complexity; it reads TNSAAKSSLSLRRA. Over residues 74–97 the composition is skewed to polar residues; it reads IGSTNEGVAGNSGSNSPAQYSHTP. Composition is skewed to low complexity over residues 286-298 and 374-398; these read QQHP…GPLP and PTNT…ANSN. Phosphoserine is present on Ser-411. Residues 455–470 are compositionally biased toward low complexity; the sequence is DENNTNNNPNASSTNL. Polar residues predominate over residues 471–485; it reads SHISKSNVNNNLGPK. Ser-596 carries the post-translational modification Phosphoserine. A GRAM domain is found at 648-716; it reads EFHTLFKDCD…KEIVQIEKKT (69 aa). The disordered stretch occupies residues 777–843; the sequence is SSSAFFDDSD…LGPNKHSPTT (67 aa). The span at 783–800 shows a compositional bias: acidic residues; the sequence is DDSDDNDDDGDLDDDDPD. Residues 818 to 832 are compositionally biased toward polar residues; that stretch reads NESNDLGKNQKSTNY. Positions 851-1018 constitute a VASt 1 domain; that stretch reads NDHLVIEANI…EIKKILSDED (168 aa). Ser-1032 is subject to Phosphoserine. The VASt 2 domain occupies 1059 to 1225; that stretch reads DDTVIDEKIN…DLKKIISNAS (167 aa). Positions 1225–1257 are disordered; the sequence is SSTKKKSRRRGKTVNKRKSSPSTIKNEKNEENF. The span at 1227–1243 shows a compositional bias: basic residues; that stretch reads TKKKSRRRGKTVNKRKS. A helical transmembrane segment spans residues 1278–1298; it reads ITSVQGIMTIISFFICLIFFF. Residues 1299–1438 lie on the Lumenal side of the membrane; the sequence is RLLFHSKNTS…DNTSATNQLL (140 aa). N-linked (GlcNAc...) asparagine glycans are attached at residues Asn-1306, Asn-1373, and Asn-1430.

This sequence belongs to the YSP2 family.

The protein resides in the mitochondrion membrane. It localises to the endoplasmic reticulum membrane. Functionally, involved in induction of programmed cell death in response to reactive oxygen species (ROS). May be involved in sterol transfer between intracellular membranes. The protein is Membrane-anchored lipid-binding protein YSP2 of Saccharomyces cerevisiae (strain ATCC 204508 / S288c) (Baker's yeast).